We begin with the raw amino-acid sequence, 194 residues long: Potassium-transporting ATPase KdpC subunit (194 aa).

Residues 12–34 form a helical membrane-spanning segment; the sequence is LFLLLLTGGVYPLLTTALGQWWF.

Belongs to the KdpC family. The system is composed of three essential subunits: KdpA, KdpB and KdpC.

It is found in the cell inner membrane. In terms of biological role, part of the high-affinity ATP-driven potassium transport (or Kdp) system, which catalyzes the hydrolysis of ATP coupled with the electrogenic transport of potassium into the cytoplasm. This subunit acts as a catalytic chaperone that increases the ATP-binding affinity of the ATP-hydrolyzing subunit KdpB by the formation of a transient KdpB/KdpC/ATP ternary complex. This chain is Potassium-transporting ATPase KdpC subunit, found in Salmonella agona (strain SL483).